Consider the following 134-residue polypeptide: MKQNLLILLSLLLVVVAIMWWLYEKKKEVPLPPPTPPTPPTPTGVPFLPMYAGLSSPVQYNPADYLYGWEKYPHGPAWSFGDRVPYAEAKNALGGHFGGGLYSPRDPILESKLGGVYIGNDLYTVGGVGGDGHW.

A helical membrane pass occupies residues 4–24; the sequence is NLLILLSLLLVVVAIMWWLYE.

The protein resides in the membrane. This is an uncharacterized protein from Invertebrate iridescent virus 6 (IIV-6).